We begin with the raw amino-acid sequence, 121 residues long: Large ribosomal subunit protein uL24 (121 aa).

Positions 1 to 23 (MVRIESSQPRKQRKARYDAPSHM) are disordered.

Belongs to the universal ribosomal protein uL24 family. Part of the 50S ribosomal subunit.

Functionally, one of two assembly initiator proteins, it binds directly to the 5'-end of the 23S rRNA, where it nucleates assembly of the 50S subunit. In terms of biological role, located at the polypeptide exit tunnel on the outside of the subunit. This Methanoregula boonei (strain DSM 21154 / JCM 14090 / 6A8) protein is Large ribosomal subunit protein uL24.